The sequence spans 376 residues: UDP-N-acetylglucosamine 2-epimerase (376 aa).

Residues R10, K15, D95, E117, H213, Q271, F276, 290–292, E296, and R313 contribute to the substrate site; that span reads SGG.

Belongs to the UDP-N-acetylglucosamine 2-epimerase family. Homodimer.

Its subcellular location is the cytoplasm. It carries out the reaction UDP-N-acetyl-alpha-D-glucosamine = UDP-N-acetyl-alpha-D-mannosamine. It participates in bacterial outer membrane biogenesis; enterobacterial common antigen biosynthesis. In terms of biological role, catalyzes the reversible epimerization at C-2 of UDP-N-acetylglucosamine (UDP-GlcNAc) and thereby provides bacteria with UDP-N-acetylmannosamine (UDP-ManNAc), the activated donor of ManNAc residues. The polypeptide is UDP-N-acetylglucosamine 2-epimerase (Escherichia coli O157:H7).